A 632-amino-acid polypeptide reads, in one-letter code: 1-deoxy-D-xylulose-5-phosphate synthase (632 aa).

Residues His-75 and 117–119 (GHA) contribute to the thiamine diphosphate site. Asp-146 provides a ligand contact to Mg(2+). Thiamine diphosphate-binding positions include 147–148 (AA), Asn-175, and Glu-370. Residue Asn-175 coordinates Mg(2+).

The protein belongs to the transketolase family. DXPS subfamily. As to quaternary structure, homodimer. Mg(2+) serves as cofactor. The cofactor is thiamine diphosphate.

It catalyses the reaction D-glyceraldehyde 3-phosphate + pyruvate + H(+) = 1-deoxy-D-xylulose 5-phosphate + CO2. It participates in metabolic intermediate biosynthesis; 1-deoxy-D-xylulose 5-phosphate biosynthesis; 1-deoxy-D-xylulose 5-phosphate from D-glyceraldehyde 3-phosphate and pyruvate: step 1/1. Functionally, catalyzes the acyloin condensation reaction between C atoms 2 and 3 of pyruvate and glyceraldehyde 3-phosphate to yield 1-deoxy-D-xylulose-5-phosphate (DXP). This chain is 1-deoxy-D-xylulose-5-phosphate synthase, found in Chlamydia muridarum (strain MoPn / Nigg).